A 623-amino-acid polypeptide reads, in one-letter code: Adenine deaminase 2 (623 aa).

The protein belongs to the metallo-dependent hydrolases superfamily. Adenine deaminase family. The cofactor is Mn(2+).

It catalyses the reaction adenine + H2O + H(+) = hypoxanthine + NH4(+). This is Adenine deaminase 2 from Jannaschia sp. (strain CCS1).